A 200-amino-acid polypeptide reads, in one-letter code: Pyridoxine/pyridoxamine 5'-phosphate oxidase (200 aa).

Residues 48–53, 63–64, Lys-70, and Gln-92 contribute to the FMN site; these read RMVLLK and YT. Lys-53 is a binding site for substrate. 3 residues coordinate substrate: Tyr-110, Arg-114, and Ser-118. FMN-binding positions include 127–128 and Trp-171; that span reads QS. Residue 177–179 coordinates substrate; sequence RLH. Residue Arg-181 participates in FMN binding.

It belongs to the pyridoxamine 5'-phosphate oxidase family. As to quaternary structure, homodimer. It depends on FMN as a cofactor.

The catalysed reaction is pyridoxamine 5'-phosphate + O2 + H2O = pyridoxal 5'-phosphate + H2O2 + NH4(+). The enzyme catalyses pyridoxine 5'-phosphate + O2 = pyridoxal 5'-phosphate + H2O2. It functions in the pathway cofactor metabolism; pyridoxal 5'-phosphate salvage; pyridoxal 5'-phosphate from pyridoxamine 5'-phosphate: step 1/1. The protein operates within cofactor metabolism; pyridoxal 5'-phosphate salvage; pyridoxal 5'-phosphate from pyridoxine 5'-phosphate: step 1/1. In terms of biological role, catalyzes the oxidation of either pyridoxine 5'-phosphate (PNP) or pyridoxamine 5'-phosphate (PMP) into pyridoxal 5'-phosphate (PLP). This Cereibacter sphaeroides (strain ATCC 17023 / DSM 158 / JCM 6121 / CCUG 31486 / LMG 2827 / NBRC 12203 / NCIMB 8253 / ATH 2.4.1.) (Rhodobacter sphaeroides) protein is Pyridoxine/pyridoxamine 5'-phosphate oxidase.